A 181-amino-acid chain; its full sequence is Large ribosomal subunit protein uL6 (181 aa).

This sequence belongs to the universal ribosomal protein uL6 family. As to quaternary structure, part of the 50S ribosomal subunit.

Its function is as follows. This protein binds to the 23S rRNA, and is important in its secondary structure. It is located near the subunit interface in the base of the L7/L12 stalk, and near the tRNA binding site of the peptidyltransferase center. The chain is Large ribosomal subunit protein uL6 from Synechococcus sp. (strain CC9605).